A 179-amino-acid polypeptide reads, in one-letter code: uncharacterized protein (179 aa).

Residues 139 to 172 (IEDLGKYIKSDRIEKEALREELEKILNTLVKHLE) adopt a coiled-coil conformation.

This is an uncharacterized protein from Methanocaldococcus jannaschii (strain ATCC 43067 / DSM 2661 / JAL-1 / JCM 10045 / NBRC 100440) (Methanococcus jannaschii).